The chain runs to 427 residues: Glutamyl-tRNA reductase (427 aa).

Residues 49–52 (TCNR), serine 101, 106–108 (EPQ), and glutamine 112 each bind substrate. Cysteine 50 functions as the Nucleophile in the catalytic mechanism. 181–186 (GAGETI) contributes to the NADP(+) binding site. Positions 407 to 427 (FPATPGYRHPPVRPDDADPAP) are disordered. Positions 418 to 427 (VRPDDADPAP) are enriched in basic and acidic residues.

It belongs to the glutamyl-tRNA reductase family. In terms of assembly, homodimer.

The catalysed reaction is (S)-4-amino-5-oxopentanoate + tRNA(Glu) + NADP(+) = L-glutamyl-tRNA(Glu) + NADPH + H(+). It participates in porphyrin-containing compound metabolism; protoporphyrin-IX biosynthesis; 5-aminolevulinate from L-glutamyl-tRNA(Glu): step 1/2. Catalyzes the NADPH-dependent reduction of glutamyl-tRNA(Glu) to glutamate 1-semialdehyde (GSA). The polypeptide is Glutamyl-tRNA reductase (Stenotrophomonas maltophilia (strain K279a)).